Here is a 473-residue protein sequence, read N- to C-terminus: Photosystem II CP43 reaction center protein (473 aa).

A propeptide spanning residues 1-14 is cleaved from the precursor; the sequence is MKTLYSLRRSYPVE. Thr-15 carries the N-acetylthreonine modification. Thr-15 bears the Phosphothreonine mark. The next 5 helical transmembrane spans lie at 69–93, 134–155, 178–200, 255–275, and 291–312; these read LFEV…PHLA, LIGP…KDRN, KALY…RKIT, KPFA…LSYS, and WFNN…ASQA. Glu-367 contributes to the [CaMn4O5] cluster binding site. Residues 447–471 form a helical membrane-spanning segment; the sequence is RARAAAAGFEKGIDRDFEPVLSMTP.

It belongs to the PsbB/PsbC family. PsbC subfamily. As to quaternary structure, PSII is composed of 1 copy each of membrane proteins PsbA, PsbB, PsbC, PsbD, PsbE, PsbF, PsbH, PsbI, PsbJ, PsbK, PsbL, PsbM, PsbT, PsbX, PsbY, PsbZ, Psb30/Ycf12, at least 3 peripheral proteins of the oxygen-evolving complex and a large number of cofactors. It forms dimeric complexes. Binds multiple chlorophylls and provides some of the ligands for the Ca-4Mn-5O cluster of the oxygen-evolving complex. It may also provide a ligand for a Cl- that is required for oxygen evolution. PSII binds additional chlorophylls, carotenoids and specific lipids. serves as cofactor.

The protein localises to the plastid. Its subcellular location is the chloroplast thylakoid membrane. One of the components of the core complex of photosystem II (PSII). It binds chlorophyll and helps catalyze the primary light-induced photochemical processes of PSII. PSII is a light-driven water:plastoquinone oxidoreductase, using light energy to abstract electrons from H(2)O, generating O(2) and a proton gradient subsequently used for ATP formation. This Abies alba (Edeltanne) protein is Photosystem II CP43 reaction center protein.